Reading from the N-terminus, the 260-residue chain is Thiamine thiazole synthase (260 aa).

NAD(+) is bound by residues Ala-36, 55–56 (EQ), Gly-63, and 154–156 (HVD). Fe cation contacts are provided by Asp-156 and His-171. Met-224 provides a ligand contact to NAD(+). Arg-234 serves as a coordination point for glycine.

It belongs to the THI4 family. In terms of assembly, homooctamer; tetramer of dimers. Fe(2+) is required as a cofactor.

The enzyme catalyses hydrogen sulfide + glycine + NAD(+) = ADP-5-ethyl-4-methylthiazole-2-carboxylate + nicotinamide + 3 H2O + H(+). It functions in the pathway cofactor biosynthesis; thiamine diphosphate biosynthesis. In terms of biological role, involved in the biosynthesis of the thiazole moiety of thiamine. Catalyzes the conversion of NAD and glycine to adenosine diphosphate 5-(2-hydroxyethyl)-4-methylthiazole-2-carboxylate (ADT), an adenylated thiazole intermediate, using free sulfide as a source of sulfur. This Methanosarcina mazei (strain ATCC BAA-159 / DSM 3647 / Goe1 / Go1 / JCM 11833 / OCM 88) (Methanosarcina frisia) protein is Thiamine thiazole synthase.